Consider the following 410-residue polypeptide: Trans-splicing factor Raa2, chloroplastic (410 aa).

2 disordered regions span residues 1–40 and 56–106; these read MRTR…QRPA and AADH…QQQV. A chloroplast-targeting transit peptide spans 1–46; the sequence is MRTRAGAFFGKQRSTSPSGSSTSASRQWLRSSPGRTQRPAAHRVLA. Positions 14–25 are enriched in low complexity; sequence STSPSGSSTSAS. Positions 26–35 are enriched in polar residues; sequence RQWLRSSPGR. Low complexity predominate over residues 96 to 106; it reads RQAQRRQQQQV.

This sequence belongs to the pseudouridine synthase TruB family. As to quaternary structure, possibly associated with other factors required for trans-splicing.

Its subcellular location is the plastid. It is found in the chloroplast. Required for trans-splicing of exons 2 and 3 of the chloroplast encoded psaA mRNA (a group II intron). It is not known if this protein has pseudouridine activity; mutation of the potential active site residue does not cause loss of trans-splicing. In Chlamydomonas reinhardtii (Chlamydomonas smithii), this protein is Trans-splicing factor Raa2, chloroplastic (RAA2).